Consider the following 374-residue polypeptide: Serine/threonine-protein kinase-transforming protein mos (374 aa).

One can recognise a Protein kinase domain in the interval 94-370; the sequence is VCLMHRLGSG…LLQRDLKAFR (277 aa). Residues 100–108 and lysine 121 contribute to the ATP site; that span reads LGSGGFGSV. Aspartate 229 acts as the Proton acceptor in catalysis.

This sequence belongs to the protein kinase superfamily. Ser/Thr protein kinase family.

It carries out the reaction L-seryl-[protein] + ATP = O-phospho-L-seryl-[protein] + ADP + H(+). The enzyme catalyses L-threonyl-[protein] + ATP = O-phospho-L-threonyl-[protein] + ADP + H(+). The chain is Serine/threonine-protein kinase-transforming protein mos (V-MOS) from Mus musculus (Mouse).